The following is a 240-amino-acid chain: Glutathione S-transferase theta-1 (240 aa).

Positions 2–82 (GLELYLDLLS…YLTRKYKVPD (81 aa)) constitute a GST N-terminal domain. Glutathione is bound by residues His-40, 53-54 (KV), and 66-67 (ES). The GST C-terminal domain occupies 88–220 (DLQARARVDE…HEVILKAKDF (133 aa)).

This sequence belongs to the GST superfamily. Theta family. Homodimer. Found in erythrocyte. Expressed at low levels in liver. In lung, expressed at low levels in club cells and ciliated cells at the alveolar/bronchiolar junction. Absent from epithelial cells of larger bronchioles.

It is found in the cytoplasm. It catalyses the reaction RX + glutathione = an S-substituted glutathione + a halide anion + H(+). In terms of biological role, conjugation of reduced glutathione to a wide number of exogenous and endogenous hydrophobic electrophiles. Acts on 1,2-epoxy-3-(4-nitrophenoxy)propane, phenethylisothiocyanate 4-nitrobenzyl chloride and 4-nitrophenethyl bromide. Displays glutathione peroxidase activity with cumene hydroperoxide. The protein is Glutathione S-transferase theta-1 (GSTT1) of Homo sapiens (Human).